The sequence spans 225 residues: Peroxiredoxin-2E-2, chloroplastic (225 aa).

The N-terminal 42 residues, 1-42 (MAAPTAAALSTLSTASVTSGKRFITSSFSLSFSSRPLATGVR), are a transit peptide targeting the chloroplast. In terms of domain architecture, Thioredoxin spans 63 to 225 (IAVGDKLPDA…SSAEEMLKAL (163 aa)). Cys111 acts as the Cysteine sulfenic acid (-SOH) intermediate in catalysis.

This sequence belongs to the peroxiredoxin family. Prx5 subfamily. In terms of assembly, monomer.

It is found in the plastid. Its subcellular location is the chloroplast stroma. The enzyme catalyses [glutaredoxin]-dithiol + a hydroperoxide = [glutaredoxin]-disulfide + an alcohol + H2O. In terms of biological role, thiol-specific peroxidase that catalyzes the reduction of hydrogen peroxide and organic hydroperoxides to water and alcohols, respectively. Plays a role in cell protection against oxidative stress by detoxifying peroxides. May be involved in chloroplast redox homeostasis. The polypeptide is Peroxiredoxin-2E-2, chloroplastic (PRXIIE-2) (Oryza sativa subsp. japonica (Rice)).